Here is a 302-residue protein sequence, read N- to C-terminus: Gap junction delta-2 protein (302 aa).

Residues Met1 to Ser19 lie on the Cytoplasmic side of the membrane. A helical transmembrane segment spans residues Thr20–Gly42. Residues Glu43–His75 lie on the Extracellular side of the membrane. A helical transmembrane segment spans residues Ile76 to Val98. Topologically, residues His99–Arg177 are cytoplasmic. Residues Phe178–Leu200 form a helical membrane-spanning segment. At Tyr201–Val232 the chain is on the extracellular side. A helical membrane pass occupies residues Phe233–Leu255. Residues Gly256–Val302 are Cytoplasmic-facing.

Belongs to the connexin family. Delta-type subfamily. As to quaternary structure, a connexon is composed of a hexamer of connexins. In terms of tissue distribution, retinal specific.

The protein localises to the cell membrane. The protein resides in the cell junction. It localises to the gap junction. Functionally, one gap junction consists of a cluster of closely packed pairs of transmembrane channels, the connexons, through which materials of low MW diffuse from one cell to a neighboring cell. The polypeptide is Gap junction delta-2 protein (Leucoraja erinaceus (Little skate)).